The following is a 164-amino-acid chain: HTH-type transcriptional regulator IscR (164 aa).

An HTH rrf2-type domain is found at 2 to 131; it reads RLTSKGRYAV…NNITLAELVN (130 aa). The segment at residues 28–51 is a DNA-binding region (H-T-H motif); it reads LADISERQGISLSYLEQLFSRLRK. Positions 92, 98, and 104 each coordinate [2Fe-2S] cluster. A disordered region spans residues 143–164; sequence NNDTRRTANGRPQETINVNLRA. The span at 152 to 164 shows a compositional bias: polar residues; sequence GRPQETINVNLRA.

It depends on [2Fe-2S] cluster as a cofactor.

In terms of biological role, regulates the transcription of several operons and genes involved in the biogenesis of Fe-S clusters and Fe-S-containing proteins. The polypeptide is HTH-type transcriptional regulator IscR (Yersinia enterocolitica serotype O:8 / biotype 1B (strain NCTC 13174 / 8081)).